We begin with the raw amino-acid sequence, 61 residues long: Cytotoxin 3 (61 aa).

4 disulfide bridges follow: Cys3/Cys22, Cys15/Cys39, Cys43/Cys54, and Cys55/Cys60.

It belongs to the three-finger toxin family. Short-chain subfamily. Type IB cytotoxin sub-subfamily. Expressed by the venom gland.

It localises to the secreted. Functionally, this protein lyses red blood cells and has cardiotoxic and hypotensive activities. The polypeptide is Cytotoxin 3 (Hemachatus haemachatus (Rinkhals)).